The chain runs to 132 residues: MATRHQARMAVVSLLYAFDLGNGNIAEHTDEILEEKKIRNKQKDFALTLYEGVMANITPVDEAIVKHLKDWDFERLGAIERATLRLATYEILFGELDSAVVINEAVEITKAFGTEQSPKFINGVLDAISKDK.

Belongs to the NusB family.

In terms of biological role, involved in transcription antitermination. Required for transcription of ribosomal RNA (rRNA) genes. Binds specifically to the boxA antiterminator sequence of the ribosomal RNA (rrn) operons. This is Transcription antitermination protein NusB from Sulfurimonas denitrificans (strain ATCC 33889 / DSM 1251) (Thiomicrospira denitrificans (strain ATCC 33889 / DSM 1251)).